The primary structure comprises 354 residues: MSSKYPRSVRGCLPLWALTLEAALILLFFFFTHYDASLEDQKGLVATYQVGQDLTVMAALGLGFLTSNLRRHSWSSVAFNLFMLALGVQWAILLDGFLSQFPPGKVVIKLLSIRLATMSAMSSLISVGAVLGKVNLVQLVVMVLVELTAFGTMRMVINNIFKTDYHVNIMHIHVFAAYFGLTVAWCLPKPPPEGTEDKEQIANSPSLSAMLGALFLWIFWPSFNSALLTNPIERKNAVFNTYYALAVSTVTAISVSSLAHPQGKINMTYMHNAVLAGGVAVGTSCHLISSPWLAMVLGLVAGLISIGGAKCLPDWLPDPLQHWGTQLGHGDSSHVWFPDRFAPKSQNMESTSCG.

8 consecutive transmembrane segments (helical) span residues 11-31 (GCLP…FFFF), 45-65 (VATY…LGFL), 77-97 (VAFN…LDGF), 125-145 (ISVG…MVLV), 167-187 (VNIM…AWCL), 209-229 (AMLG…ALLT), 238-258 (VFNT…VSSL), and 287-307 (LISS…ISIG).

The protein belongs to the ammonium transporter (TC 2.A.49) family. Rh subfamily.

It localises to the membrane. May be part of an oligomeric complex which is likely to have a transport or channel function in the erythrocyte membrane. This Hylobates pileatus (Pileated gibbon) protein is RH-like protein.